Consider the following 341-residue polypeptide: uncharacterized protein (341 aa).

Helical transmembrane passes span 8–28, 63–83, 171–191, and 317–337; these read LMLT…PLII, LMYF…VFAL, IYIM…IALS, and EFLV…KIFL. In terms of domain architecture, VWFA spans 101–305; sequence DIVIVLDISP…SKKENLERKI (205 aa).

The protein localises to the cell membrane. This is an uncharacterized protein from Borreliella burgdorferi (strain ATCC 35210 / DSM 4680 / CIP 102532 / B31) (Borrelia burgdorferi).